A 76-amino-acid chain; its full sequence is Adropin (76 aa).

The signal sequence occupies residues 1–33 (MGAAISQGALIAIVCNGLVGFLLLLLWVILCWA). Residues 41 to 76 (VDSLSESSPNSSPGPCPEKAPPPQKPSHEGSYLLQP) form a disordered region. Residues 52–65 (SPGPCPEKAPPPQK) are compositionally biased toward pro residues.

As to expression, expressed in liver and brain.

It is found in the secreted. Its function is as follows. Involved in the regulation of glucose homeostasis and lipid metabolism. The sequence is that of Adropin (ENHO) from Homo sapiens (Human).